Consider the following 194-residue polypeptide: 5'-deoxynucleotidase VC_1978 (194 aa).

Residues 18 to 19 and His-33 each bind substrate; that span reads RW. The HD domain occupies 30-142; that stretch reads ISEHSLQVAF…VKQADAICAY (113 aa). Residues His-33, His-68, and Asp-69 each contribute to the a divalent metal cation site. Residues Asp-69, 77–80, and Asp-137 contribute to the substrate site; that span reads DLPT. Residue Asp-137 participates in a divalent metal cation binding.

The protein belongs to the 5DNU family. In terms of assembly, homodimer. Requires a divalent metal cation as cofactor.

The protein resides in the cytoplasm. It catalyses the reaction a 2'-deoxyribonucleoside 5'-phosphate + H2O = a 2'-deoxyribonucleoside + phosphate. Catalyzes the strictly specific dephosphorylation of 2'-deoxyribonucleoside 5'-monophosphates. The sequence is that of 5'-deoxynucleotidase VC_1978 from Vibrio cholerae serotype O1 (strain ATCC 39315 / El Tor Inaba N16961).